Consider the following 208-residue polypeptide: MAANIQQQFGEQLLRAAQVVEEQIDQEMNKLENLEEDDLEVIRRQRMEQMKKAQKDRIEMLSHGHGKYEEVADEKEFFEATKKSDKVVCLFYLPGNFRCKIVDKHFEILARKHVGTRFIHVNAEKVHFLTTRLNIRVIPSIAIVVKQQTVDYIRGFDELGGKDEFTTETMENRLARSEVLTVEKKHTAPAKKKIIRSGVEEYDNEEDW.

A Thioredoxin domain is found at 68–179 (YEEVADEKEF…MENRLARSEV (112 aa)).

In terms of tissue distribution, expressed throughout the body with high expression in the nervous system, including the ventral nerve cord and tail neurons, and vulva.

The protein resides in the nucleus. Its subcellular location is the cytoplasm. Required for normal microtubule organization and function. Regulates tubulin acetylation in ALM and PLM neurons. This is Thioredoxin domain-containing protein 9 from Caenorhabditis elegans.